The sequence spans 353 residues: Heat-inducible transcription repressor HrcA (353 aa).

This sequence belongs to the HrcA family.

Functionally, negative regulator of class I heat shock genes (grpE-dnaK-dnaJ and groELS operons). Prevents heat-shock induction of these operons. This chain is Heat-inducible transcription repressor HrcA, found in Synechococcus elongatus (strain ATCC 33912 / PCC 7942 / FACHB-805) (Anacystis nidulans R2).